A 131-amino-acid chain; its full sequence is Large ribosomal subunit protein uL24 (131 aa).

Belongs to the universal ribosomal protein uL24 family. In terms of assembly, part of the 50S ribosomal subunit.

Its function is as follows. One of two assembly initiator proteins, it binds directly to the 5'-end of the 23S rRNA, where it nucleates assembly of the 50S subunit. Located at the polypeptide exit tunnel on the outside of the subunit. The sequence is that of Large ribosomal subunit protein uL24 from Korarchaeum cryptofilum (strain OPF8).